The chain runs to 314 residues: Homoserine kinase (314 aa).

ATP is bound at residue 96–106; the sequence is PIGSGLGSSAC.

Belongs to the GHMP kinase family. Homoserine kinase subfamily.

Its subcellular location is the cytoplasm. It catalyses the reaction L-homoserine + ATP = O-phospho-L-homoserine + ADP + H(+). It participates in amino-acid biosynthesis; L-threonine biosynthesis; L-threonine from L-aspartate: step 4/5. Its function is as follows. Catalyzes the ATP-dependent phosphorylation of L-homoserine to L-homoserine phosphate. The polypeptide is Homoserine kinase (Haemophilus influenzae (strain PittEE)).